The sequence spans 378 residues: Queuine tRNA-ribosyltransferase (378 aa).

Asp-90 acts as the Proton acceptor in catalysis. Residues 90-94 (DSGGY), Asp-152, Gln-194, and Gly-223 each bind substrate. Positions 254–260 (GVGKPED) are RNA binding. The active-site Nucleophile is Asp-273. The segment at 278–282 (TRNAR) is RNA binding; important for wobble base 34 recognition. The Zn(2+) site is built by Cys-311, Cys-313, Cys-316, and His-342.

Belongs to the queuine tRNA-ribosyltransferase family. In terms of assembly, homodimer. Within each dimer, one monomer is responsible for RNA recognition and catalysis, while the other monomer binds to the replacement base PreQ1. Zn(2+) is required as a cofactor.

The enzyme catalyses 7-aminomethyl-7-carbaguanine + guanosine(34) in tRNA = 7-aminomethyl-7-carbaguanosine(34) in tRNA + guanine. It participates in tRNA modification; tRNA-queuosine biosynthesis. Catalyzes the base-exchange of a guanine (G) residue with the queuine precursor 7-aminomethyl-7-deazaguanine (PreQ1) at position 34 (anticodon wobble position) in tRNAs with GU(N) anticodons (tRNA-Asp, -Asn, -His and -Tyr). Catalysis occurs through a double-displacement mechanism. The nucleophile active site attacks the C1' of nucleotide 34 to detach the guanine base from the RNA, forming a covalent enzyme-RNA intermediate. The proton acceptor active site deprotonates the incoming PreQ1, allowing a nucleophilic attack on the C1' of the ribose to form the product. After dissociation, two additional enzymatic reactions on the tRNA convert PreQ1 to queuine (Q), resulting in the hypermodified nucleoside queuosine (7-(((4,5-cis-dihydroxy-2-cyclopenten-1-yl)amino)methyl)-7-deazaguanosine). This chain is Queuine tRNA-ribosyltransferase, found in Aquifex aeolicus (strain VF5).